The chain runs to 251 residues: Ubiquinone/menaquinone biosynthesis C-methyltransferase UbiE (251 aa).

S-adenosyl-L-methionine is bound by residues threonine 74, aspartate 95, 123–124 (NA), and serine 140.

Belongs to the class I-like SAM-binding methyltransferase superfamily. MenG/UbiE family.

The catalysed reaction is a 2-demethylmenaquinol + S-adenosyl-L-methionine = a menaquinol + S-adenosyl-L-homocysteine + H(+). It catalyses the reaction a 2-methoxy-6-(all-trans-polyprenyl)benzene-1,4-diol + S-adenosyl-L-methionine = a 5-methoxy-2-methyl-3-(all-trans-polyprenyl)benzene-1,4-diol + S-adenosyl-L-homocysteine + H(+). The protein operates within quinol/quinone metabolism; menaquinone biosynthesis; menaquinol from 1,4-dihydroxy-2-naphthoate: step 2/2. Its pathway is cofactor biosynthesis; ubiquinone biosynthesis. In terms of biological role, methyltransferase required for the conversion of demethylmenaquinol (DMKH2) to menaquinol (MKH2) and the conversion of 2-polyprenyl-6-methoxy-1,4-benzoquinol (DDMQH2) to 2-polyprenyl-3-methyl-6-methoxy-1,4-benzoquinol (DMQH2). In Enterobacter sp. (strain 638), this protein is Ubiquinone/menaquinone biosynthesis C-methyltransferase UbiE.